The following is a 290-amino-acid chain: MGTLANHAFSKMNGIGNEIVVVDLRDRPAAVTAEEARAVASPGGVPYDQLMVLQPPRLPGTEAFVSIYNNDGSEANACGNGMRCVARQVFEATGKAALTFETRAGLLSCWQGPAPGLYTVDMGPPKFGWRDIPLAEEFRDTRYIELQVGPIDAPVLHSPSVVSMGNPHAIFWVDDVNAHDLERFGPLLENHPIFPERANITLAHIAGRDRIVMRTWERGAGMTKACGSAACATAVAAARLKRADRVVDMVLPGGGLTIEWRERDDHVLMTGPAVFEYAGTFDPALFASVA.

Residues Asn17, Gln49, and Asn69 each coordinate substrate. Catalysis depends on Cys78, which acts as the Proton donor. Substrate-binding positions include 79-80 (GN), Asn166, Asn199, and 217-218 (ER). The active-site Proton acceptor is the Cys226. 227–228 (GS) is a binding site for substrate.

The protein belongs to the diaminopimelate epimerase family. In terms of assembly, homodimer.

The protein resides in the cytoplasm. The enzyme catalyses (2S,6S)-2,6-diaminopimelate = meso-2,6-diaminopimelate. It functions in the pathway amino-acid biosynthesis; L-lysine biosynthesis via DAP pathway; DL-2,6-diaminopimelate from LL-2,6-diaminopimelate: step 1/1. Its function is as follows. Catalyzes the stereoinversion of LL-2,6-diaminopimelate (L,L-DAP) to meso-diaminopimelate (meso-DAP), a precursor of L-lysine and an essential component of the bacterial peptidoglycan. This Nitrobacter hamburgensis (strain DSM 10229 / NCIMB 13809 / X14) protein is Diaminopimelate epimerase.